A 113-amino-acid chain; its full sequence is uncharacterized protein (113 aa).

This sequence belongs to the ycf68 family.

Its subcellular location is the plastid. The protein resides in the chloroplast. This is an uncharacterized protein from Eucalyptus globulus subsp. globulus (Tasmanian blue gum).